The primary structure comprises 194 residues: Peptidyl-tRNA hydrolase (194 aa).

Y17 is a tRNA binding site. H22 functions as the Proton acceptor in the catalytic mechanism. Y68, N70, and N116 together coordinate tRNA.

The protein belongs to the PTH family. As to quaternary structure, monomer.

Its subcellular location is the cytoplasm. It catalyses the reaction an N-acyl-L-alpha-aminoacyl-tRNA + H2O = an N-acyl-L-amino acid + a tRNA + H(+). Its function is as follows. Hydrolyzes ribosome-free peptidyl-tRNAs (with 1 or more amino acids incorporated), which drop off the ribosome during protein synthesis, or as a result of ribosome stalling. Catalyzes the release of premature peptidyl moieties from peptidyl-tRNA molecules trapped in stalled 50S ribosomal subunits, and thus maintains levels of free tRNAs and 50S ribosomes. The polypeptide is Peptidyl-tRNA hydrolase (Azotobacter vinelandii (strain DJ / ATCC BAA-1303)).